An 83-amino-acid polypeptide reads, in one-letter code: Putative beta-neurotoxin RjAa12f (83 aa).

The first 18 residues, 1–18 (MKILIFIIASFMLIGVEC), serve as a signal peptide directing secretion. In terms of domain architecture, LCN-type CS-alpha/beta spans 19–82 (KEGYPMGRDG…VWDSSTNKCG (64 aa)). 4 cysteine pairs are disulfide-bonded: Cys29/Cys81, Cys33/Cys55, Cys40/Cys62, and Cys44/Cys64. Residue Gly83 is a propeptide.

Contains 4 disulfide bonds. In terms of tissue distribution, expressed by the venom gland.

It localises to the secreted. Its function is as follows. Beta toxins bind voltage-independently at site-4 of sodium channels (Nav) and shift the voltage of activation toward more negative potentials thereby affecting sodium channel activation and promoting spontaneous and repetitive firing. This toxin is lethal to insects (A.domestica). It is not toxic to mice and does not affect mammal F11 sodium channels. The sequence is that of Putative beta-neurotoxin RjAa12f from Rhopalurus junceus (Caribbean blue scorpion).